The sequence spans 396 residues: ATP-dependent RNA helicase FAL1 (396 aa).

Positions 23 to 51 match the Q motif motif; sequence PTFEALNLKEDLLRGIYAYNFEKPSAIQQ. In terms of domain architecture, Helicase ATP-binding spans 54 to 224; sequence IIPIIRGRDV…TKFMTDPVRI (171 aa). Residue 67-74 coordinates ATP; it reads AQSGTGKT. Residues 172-175 carry the DEAD box motif; sequence DESD. The 162-residue stretch at 235-396 folds into the Helicase C-terminal domain; the sequence is GIKQFFVAVE…EMPMNVAELT (162 aa).

This sequence belongs to the DEAD box helicase family. DDX48/FAL1 subfamily.

Its subcellular location is the nucleus. The protein resides in the nucleolus. It catalyses the reaction ATP + H2O = ADP + phosphate + H(+). In terms of biological role, ATP-dependent RNA helicase involved in 40S ribosomal subunit biogenesis. Required for the processing and cleavage of 35S pre-rRNA at sites A0, A1, and A2, leading to mature 18S rRNA. The chain is ATP-dependent RNA helicase FAL1 (FAL1) from Cryptococcus neoformans var. neoformans serotype D (strain B-3501A) (Filobasidiella neoformans).